Reading from the N-terminus, the 114-residue chain is Fluoride-specific ion channel FluC 1 (114 aa).

The next 3 membrane-spanning stretches (helical) occupy residues 28–48 (VFPWATFIINITGALLLGFLH), 56–76 (ILLLLGTGFLGGYTTFSTFQV), and 91–111 (IIYLLLTVICGILAAYCGSWL). Gly-66 and Thr-69 together coordinate Na(+).

The protein belongs to the fluoride channel Fluc/FEX (TC 1.A.43) family.

The protein localises to the cell membrane. The catalysed reaction is fluoride(in) = fluoride(out). With respect to regulation, na(+) is not transported, but it plays an essential structural role and its presence is essential for fluoride channel function. Its function is as follows. Fluoride-specific ion channel. Important for reducing fluoride concentration in the cell, thus reducing its toxicity. In Ligilactobacillus salivarius (strain UCC118) (Lactobacillus salivarius), this protein is Fluoride-specific ion channel FluC 1.